Consider the following 82-residue polypeptide: Large ribosomal subunit protein uL29 (82 aa).

It belongs to the universal ribosomal protein uL29 family.

This chain is Large ribosomal subunit protein uL29, found in Trichodesmium erythraeum (strain IMS101).